The following is a 167-amino-acid chain: MPTRSLPTFLTLLLLASIDWVSKLVVLLKSCQLSPHSSAFLYSYVWGHFSFLIIPSFNEGAAFGLFTQYKIPLLIFRVCVILGLALFLRIKYKSLHRRTRVALTLILAGALGNVGDILLYGKVVDFLSLSYYSWRFPSFNLADAFISIGTLLLIGHLYFTKESKKYF.

The next 4 membrane-spanning stretches (helical) occupy residues 8–28 (TFLT…VVLL), 46–66 (WGHF…FGLF), 68–88 (QYKI…ALFL), and 101–121 (VALT…LLYG). Active-site residues include Asp-125 and Asp-143. A helical membrane pass occupies residues 139–159 (FNLADAFISIGTLLLIGHLYF).

Belongs to the peptidase A8 family.

It is found in the cell inner membrane. It carries out the reaction Release of signal peptides from bacterial membrane prolipoproteins. Hydrolyzes -Xaa-Yaa-Zaa-|-(S,diacylglyceryl)Cys-, in which Xaa is hydrophobic (preferably Leu), and Yaa (Ala or Ser) and Zaa (Gly or Ala) have small, neutral side chains.. Its pathway is protein modification; lipoprotein biosynthesis (signal peptide cleavage). Functionally, this protein specifically catalyzes the removal of signal peptides from prolipoproteins. The protein is Lipoprotein signal peptidase of Chlamydia trachomatis serovar A (strain ATCC VR-571B / DSM 19440 / HAR-13).